A 207-amino-acid chain; its full sequence is MVFEKIDKNSWNRKEYFDHYFASVPCTYSMTVKVDITQIKEKGMKLYPAMLYYIAMIVNRHSEFRTAINQDGELGIYDEMIPSYTIFHNDTETFSSLWTECKSDFKSFLADYESDTQRYGNNHRMEGKPNAPENIFNVSMIPWSTFDGFNLNLQKGYDYLIPIFTMGKYYKEDNKIILPLAIQVHHAVCDGFHICRFVNELQELINS.

His-186 (proton acceptor) is an active-site residue.

The protein belongs to the chloramphenicol acetyltransferase family. In terms of assembly, homotrimer.

It catalyses the reaction chloramphenicol + acetyl-CoA = chloramphenicol 3-acetate + CoA. Its function is as follows. This enzyme is an effector of chloramphenicol resistance in bacteria. The polypeptide is Chloramphenicol acetyltransferase (catP) (Clostridium perfringens).